Consider the following 294-residue polypeptide: Mitochondrial glycine transporter (294 aa).

Solcar repeat units lie at residues 5–84 (RRAT…IRQA), 102–186 (LNMY…MKVL), and 208–292 (ASTL…IVKK). Helical transmembrane passes span 11-36 (LIGG…TRLQ), 59-85 (GALP…RQAI), 108-133 (MFSG…VRYE), 161-184 (GFGA…DRMK), 212-238 (INGS…KTRM), and 267-285 (GISL…AWGI).

Belongs to the mitochondrial carrier (TC 2.A.29) family. SLC25A38 subfamily.

The protein resides in the mitochondrion inner membrane. It catalyses the reaction glycine(in) = glycine(out). Functionally, mitochondrial glycine transporter that imports glycine into the mitochondrial matrix. Plays an important role in providing glycine for the first enzymatic step in heme biosynthesis, the condensation of glycine with succinyl-CoA to produce 5-aminolevulinate (ALA) in the mitochondrial matrix. This is Mitochondrial glycine transporter from Kluyveromyces lactis (strain ATCC 8585 / CBS 2359 / DSM 70799 / NBRC 1267 / NRRL Y-1140 / WM37) (Yeast).